We begin with the raw amino-acid sequence, 275 residues long: Phosphite import ATP-binding protein PxtA (275 aa).

The ABC transporter domain occupies 11–252 (LRVDRLSVVY…QLERIYAGRS (242 aa)). 44 to 51 (GLSGAGKS) provides a ligand contact to ATP. Positions 251-275 (RSTTQPANAPAEPPVMLEPSLEMSR) are disordered.

Belongs to the ABC transporter superfamily. Phosphonates importer (TC 3.A.1.9.1) family. In terms of assembly, the complex is composed of two ATP-binding proteins (PtxA), two transmembrane proteins (PtxC) and a solute-binding protein (PtxB).

It localises to the cell inner membrane. It carries out the reaction phosphite(out) + ATP + H2O = phosphite(in) + ADP + phosphate + H(+). Part of the ABC transporter complex PtxABC involved in phosphite import. Responsible for energy coupling to the transport system. The polypeptide is Phosphite import ATP-binding protein PxtA (ptxA) (Stutzerimonas stutzeri (Pseudomonas stutzeri)).